A 430-amino-acid chain; its full sequence is MFVDQVTISLKAGDGGNGITAYRREKYVPFGGPAGGDGGKGASVVFEVDEGLRTLLDFRYQRHFKAKKGENGQSSNMHGRGADDLVLKVPPGTIIKSVETDEVLADLVEDGQRAVVARGGRGGRGNSRFATPRNPAPDFSENGEPGEELDVTLELKLLADVGLVGFPSVGKSTLLSIVSKAKPKIGAYHFTTIKPNLGVVSTPDNRSFVMADLPGLIEGASDGVGLGHQFLRHVERTKVIVHMIDMSGSEGRDPFDDYQIINKELVNYKQRLEDRPQIVVANKMDMPDAQDNLTLFKEQVDDSVTIIPVSTITRDNIEQLLYAIADKLDEVKDIDFSVDNDEEIGVNRVLYKHTPSQDKFTITRDDDGAYVVSGNAIERMFKMTDFNSDPAVRRFARQMRSMGIDDALRERGCSNGDIVRILGGEFEFVE.

The Obg domain maps to 1-158; the sequence is MFVDQVTISL…LDVTLELKLL (158 aa). Residues 118 to 145 are disordered; that stretch reads RGGRGGRGNSRFATPRNPAPDFSENGEP. Positions 159–329 constitute an OBG-type G domain; sequence ADVGLVGFPS…LLYAIADKLD (171 aa). GTP contacts are provided by residues 165 to 172, 190 to 194, 212 to 215, 282 to 285, and 310 to 312; these read GFPSVGKS, FTTIK, DLPG, NKMD, and STI. Mg(2+) contacts are provided by serine 172 and threonine 192. One can recognise an OCT domain in the interval 352-430; the sequence is KHTPSQDKFT…ILGGEFEFVE (79 aa).

The protein belongs to the TRAFAC class OBG-HflX-like GTPase superfamily. OBG GTPase family. Monomer. The cofactor is Mg(2+).

The protein resides in the cytoplasm. Functionally, an essential GTPase which binds GTP, GDP and possibly (p)ppGpp with moderate affinity, with high nucleotide exchange rates and a fairly low GTP hydrolysis rate. Plays a role in control of the cell cycle, stress response, ribosome biogenesis and in those bacteria that undergo differentiation, in morphogenesis control. The polypeptide is GTPase Obg (Staphylococcus haemolyticus (strain JCSC1435)).